Reading from the N-terminus, the 310-residue chain is Olfactory receptor 5P1 (310 aa).

Topologically, residues 1-25 (MEPGNHTAVTKFILLGLTDDPTLCV) are extracellular. N-linked (GlcNAc...) asparagine glycosylation is present at asparagine 5. A helical transmembrane segment spans residues 26–46 (IFFVFFLGIYIVTLVGNISII). At 47 to 54 (NLVRSCPQ) the chain is on the cytoplasmic side. The chain crosses the membrane as a helical span at residues 55-75 (LQTPMYMFLSHLAFVDIGYST). The Extracellular segment spans residues 76 to 99 (SVTPIMLIGFIVHETGLPVHACEA). A disulfide bond links cysteine 97 and cysteine 189. A helical transmembrane segment spans residues 100-120 (QLCSVVTFGTAECFLLAAMAY). At 121–133 (DRYVAICSPLLYS) the chain is on the cytoplasmic side. A helical membrane pass occupies residues 134-154 (THMSSQICLLLVGASYVGGCV). Residues 155-196 (NAWTFTGCLLSLSFCGPNKIDHFFCDFSPLLKLSCSDVSIIG) are Extracellular-facing. A helical membrane pass occupies residues 197-217 (IIPSISAGSIIVVTVFVISVS). Topologically, residues 218-237 (YIYILITILKMRSTEGRHKA) are cytoplasmic. The helical transmembrane segment at 238 to 258 (FSTCTSHLTAVTLYYGTITFI) threads the bilayer. Over 259 to 271 (YVMPKSSYSTKQN) the chain is Extracellular. Residues 272 to 292 (RVVSLFYTVVIPMLNPLIYSL) form a helical membrane-spanning segment. Over 293–310 (RNRDVKEALRKATLRIYS) the chain is Cytoplasmic.

It belongs to the G-protein coupled receptor 1 family.

It localises to the cell membrane. In terms of biological role, potential odorant receptor. This chain is Olfactory receptor 5P1, found in Mus musculus (Mouse).